Consider the following 197-residue polypeptide: NADH-quinone oxidoreductase subunit C (197 aa).

This sequence belongs to the complex I 30 kDa subunit family. NDH-1 is composed of 14 different subunits. Subunits NuoB, C, D, E, F, and G constitute the peripheral sector of the complex.

The protein resides in the cell inner membrane. The catalysed reaction is a quinone + NADH + 5 H(+)(in) = a quinol + NAD(+) + 4 H(+)(out). Its function is as follows. NDH-1 shuttles electrons from NADH, via FMN and iron-sulfur (Fe-S) centers, to quinones in the respiratory chain. The immediate electron acceptor for the enzyme in this species is believed to be ubiquinone. Couples the redox reaction to proton translocation (for every two electrons transferred, four hydrogen ions are translocated across the cytoplasmic membrane), and thus conserves the redox energy in a proton gradient. The protein is NADH-quinone oxidoreductase subunit C of Neisseria meningitidis serogroup A / serotype 4A (strain DSM 15465 / Z2491).